We begin with the raw amino-acid sequence, 445 residues long: MDIRQVRETIEMIEEQHFDIRTITMGISLLDCIDPNIDRAAEKIYKKITEKASQLVAVGDDIAAELGIPIVNKRVSVTPIALIGAATDATDYLPLAKALDKAAHEIGVDFIGGFSALVQKGYQKGDEILINSIPKALAETQKVCASVNIGSTKSGINMTAVADMGRIIKETAEQSDLGAAKLVVFANAVEDNPFMAGAFHGVGEADVVINVGVSGPGVVKRALEKVKGESFDILAETVKKTAFKITRIGQLVGQMASERLGVKFGIVDLSLAPTPAVGDSVARVLEEMGLEMVGTHGTTAALALLNDAVKKGGVMACNQVGGLSGAFIPVSEDEGMIAAVQNGSLNLEKLEAMTAICSVGLDMIAIPEDTPYQTIAAMIADEAAIGVINQKTTAVRIIPKGKVGDMIEFGGLLGAAPVMAVNGHSSADFIARGGQIPAPIHSFKN.

Belongs to the UPF0210 family. Homodimer.

In Streptococcus uberis (strain ATCC BAA-854 / 0140J), this protein is UPF0210 protein SUB1511.